We begin with the raw amino-acid sequence, 210 residues long: Glutathione S-transferase 3 (210 aa).

The 80-residue stretch at 1 to 80 folds into the GST N-terminal domain; sequence MDFYYLPLSA…YLVEKYGKQN (80 aa). Glutathione is bound by residues Ser9, 50-52, and 64-66; these read HTI and ESR. Residues 87 to 208 enclose the GST C-terminal domain; it reads CPKKRALINQ…AGCLEMKKYF (122 aa).

Belongs to the GST superfamily. Theta family. In terms of assembly, homodimer.

The catalysed reaction is RX + glutathione = an S-substituted glutathione + a halide anion + H(+). Functionally, conjugation of reduced glutathione to a wide number of exogenous and endogenous hydrophobic electrophiles. This chain is Glutathione S-transferase 3 (Gst3), found in Musca domestica (House fly).